The following is a 397-amino-acid chain: CCA-adding enzyme (397 aa).

Gly-26 and Arg-29 together coordinate ATP. 2 residues coordinate CTP: Gly-26 and Arg-29. Asp-39 and Asp-41 together coordinate Mg(2+). ATP is bound by residues Arg-110, Asp-153, Arg-156, Arg-159, and Arg-162. Arg-110, Asp-153, Arg-156, Arg-159, and Arg-162 together coordinate CTP.

Belongs to the tRNA nucleotidyltransferase/poly(A) polymerase family. Bacterial CCA-adding enzyme type 3 subfamily. As to quaternary structure, homodimer. Mg(2+) serves as cofactor.

The enzyme catalyses a tRNA precursor + 2 CTP + ATP = a tRNA with a 3' CCA end + 3 diphosphate. It carries out the reaction a tRNA with a 3' CCA end + 2 CTP + ATP = a tRNA with a 3' CCACCA end + 3 diphosphate. Functionally, catalyzes the addition and repair of the essential 3'-terminal CCA sequence in tRNAs without using a nucleic acid template. Adds these three nucleotides in the order of C, C, and A to the tRNA nucleotide-73, using CTP and ATP as substrates and producing inorganic pyrophosphate. tRNA 3'-terminal CCA addition is required both for tRNA processing and repair. Also involved in tRNA surveillance by mediating tandem CCA addition to generate a CCACCA at the 3' terminus of unstable tRNAs. While stable tRNAs receive only 3'-terminal CCA, unstable tRNAs are marked with CCACCA and rapidly degraded. The protein is CCA-adding enzyme of Bacillus thuringiensis subsp. konkukian (strain 97-27).